Here is a 185-residue protein sequence, read N- to C-terminus: Large ribosomal subunit protein uL18 (185 aa).

It belongs to the universal ribosomal protein uL18 family. Part of the 50S ribosomal subunit. Contacts the 5S and 23S rRNAs.

Functionally, this is one of the proteins that bind and probably mediate the attachment of the 5S RNA into the large ribosomal subunit, where it forms part of the central protuberance. The polypeptide is Large ribosomal subunit protein uL18 (Halorubrum lacusprofundi (strain ATCC 49239 / DSM 5036 / JCM 8891 / ACAM 34)).